The chain runs to 396 residues: L-lactate dehydrogenase (396 aa).

The 380-residue stretch at 1 to 380 (MIISAASDYR…SGDSLVQELG (380 aa)) folds into the FMN hydroxy acid dehydrogenase domain. Residue Tyr-24 participates in substrate binding. Residues Ser-106 and Gln-127 each contribute to the FMN site. Position 129 (Tyr-129) interacts with substrate. Thr-155 contributes to the FMN binding site. Arg-164 is a binding site for substrate. Residue Lys-251 coordinates FMN. His-275 serves as the catalytic Proton acceptor. A substrate-binding site is contributed by Arg-278. 306–330 (DSGIRNGLDVVRMIALGADTVLLGR) provides a ligand contact to FMN.

This sequence belongs to the FMN-dependent alpha-hydroxy acid dehydrogenase family. FMN is required as a cofactor.

It is found in the cell inner membrane. The catalysed reaction is (S)-lactate + A = pyruvate + AH2. Functionally, catalyzes the conversion of L-lactate to pyruvate. Is coupled to the respiratory chain. The polypeptide is L-lactate dehydrogenase (Salmonella schwarzengrund (strain CVM19633)).